A 339-amino-acid polypeptide reads, in one-letter code: MKIVIDLMGADHGVLPIIEGVSRALENKSFSVVLVGDKDKATPFISKELASKVEMIHTQDYIKMEEAATEAIKRKESSIYLGMDILKNGADALISAGHSGATMGLATLRLGRIKGVERPAICTLMPSVGKRPSVLLDAGANTDCKPEYLIDFALMGYEYAKSVLHYDSPKVGLLSNGEEDIKGNTLVKETHKMLKAYDFFYGNVEGSDIFKGVVDVVVCDGFMGNVVLKTTEGVASAIGSIFKDEIKSSFKSKMGALMLKNAFGILKQKTDYAEYGGAPLLGVNKSVIISHGKSNARAVECAIYQAISAVESQVCLRITQAFESLKSQSFESQSDQQDA.

It belongs to the PlsX family. Homodimer. Probably interacts with PlsY.

The protein localises to the cytoplasm. It carries out the reaction a fatty acyl-[ACP] + phosphate = an acyl phosphate + holo-[ACP]. The protein operates within lipid metabolism; phospholipid metabolism. Functionally, catalyzes the reversible formation of acyl-phosphate (acyl-PO(4)) from acyl-[acyl-carrier-protein] (acyl-ACP). This enzyme utilizes acyl-ACP as fatty acyl donor, but not acyl-CoA. This Helicobacter pylori (strain J99 / ATCC 700824) (Campylobacter pylori J99) protein is Phosphate acyltransferase.